Here is a 97-residue protein sequence, read N- to C-terminus: Acylphosphatase (97 aa).

The 87-residue stretch at 9-95 (TRHLRIHGLV…CDAQGFEQRE (87 aa)) folds into the Acylphosphatase-like domain. Catalysis depends on residues R24 and N42.

The protein belongs to the acylphosphatase family.

It carries out the reaction an acyl phosphate + H2O = a carboxylate + phosphate + H(+). In Acidovorax sp. (strain JS42), this protein is Acylphosphatase (acyP).